The primary structure comprises 226 residues: Protein B (226 aa).

The segment at 37–100 (DNVQGTDYEK…FSTQHLANKV (64 aa)) is igG constant region-binding. 3 consecutive repeats follow at residues 158 to 168 (TKSKLDKEIWN), 169 to 179 (TRFTRDKKVLN), and 180 to 190 (VKEFKVYNTLN).

It is found in the secreted. In terms of biological role, protein B belongs to the group of bacterial Fc-binding protein. The polypeptide is Protein B (Streptococcus agalactiae).